The chain runs to 124 residues: Large ribosomal subunit protein bL19 (124 aa).

The protein belongs to the bacterial ribosomal protein bL19 family.

In terms of biological role, this protein is located at the 30S-50S ribosomal subunit interface and may play a role in the structure and function of the aminoacyl-tRNA binding site. This is Large ribosomal subunit protein bL19 from Orientia tsutsugamushi (strain Ikeda) (Rickettsia tsutsugamushi).